Consider the following 617-residue polypeptide: Cell pattern formation-associated protein STUA (617 aa).

The disordered stretch occupies residues Met1–Leu79. Over residues Thr24–Ser34 the composition is skewed to polar residues. Over residues Pro45 to Tyr58 the composition is skewed to low complexity. Over residues Gly61 to Gln76 the composition is skewed to polar residues. The 107-residue stretch at Arg106 to Pro212 folds into the HTH APSES-type domain. Residues Gly140–Glu161 constitute a DNA-binding region (H-T-H motif). Disordered regions lie at residues Ala223–Pro274, Ser300–Ala451, and Ala463–Arg617. Low complexity-rich tracts occupy residues Gln305–Ala318 and Pro334–Thr345. 2 stretches are compositionally biased toward polar residues: residues Ile346–Asn361 and Pro368–Ser382. Basic and acidic residues predominate over residues Glu438–His447. Low complexity predominate over residues Pro488–Ala509. Polar residues-rich tracts occupy residues Gln519–Arg533 and Ser553–Asn563. The tract at residues Lys569–Lys593 is nuclear localization domain. Positions Gln599 to Arg617 are enriched in low complexity.

The protein belongs to the EFG1/PHD1/stuA family.

Its subcellular location is the nucleus. Transcription factor that regulates asexual reproduction. Binds the StuA-response elements (StRE) with the consensus sequence 5'-(A/T)CGCG(T/A)N(A/C)-3' at the promoters of target genes. Required for the formation of aerial hyphae, efficient conidiation, and the formation of perithecia. Essential for the generation of normal turgor pressure within the appressorium. Required for infection of intact apple fruit and penetration of onion epidermal cells. The chain is Cell pattern formation-associated protein STUA from Colletotrichum gloeosporioides (Anthracnose fungus).